Here is a 258-residue protein sequence, read N- to C-terminus: Dihydroorotate dehydrogenase B (NAD(+)), electron transfer subunit (258 aa).

The FAD-binding FR-type domain occupies 2-100; sequence ILKENLTVVS…LGPQGNGFDL (99 aa). FAD is bound by residues 51–54, 68–70, and 75–76; these read RPIS, IYR, and GT. 4 residues coordinate [2Fe-2S] cluster: cysteine 220, cysteine 225, cysteine 228, and cysteine 244.

This sequence belongs to the PyrK family. In terms of assembly, heterotetramer of 2 PyrK and 2 PyrD type B subunits. Requires [2Fe-2S] cluster as cofactor. FAD serves as cofactor.

It participates in pyrimidine metabolism; UMP biosynthesis via de novo pathway; orotate from (S)-dihydroorotate (NAD(+) route): step 1/1. Responsible for channeling the electrons from the oxidation of dihydroorotate from the FMN redox center in the PyrD type B subunit to the ultimate electron acceptor NAD(+). This Streptococcus mutans serotype c (strain ATCC 700610 / UA159) protein is Dihydroorotate dehydrogenase B (NAD(+)), electron transfer subunit.